Reading from the N-terminus, the 438-residue chain is Xylose isomerase (438 aa).

Mg(2+) contacts are provided by aspartate 306 and aspartate 308.

This sequence belongs to the xylose isomerase family. In terms of assembly, homotetramer. The cofactor is Mg(2+).

The protein localises to the cytoplasm. The catalysed reaction is alpha-D-xylose = alpha-D-xylulofuranose. In Caldicellulosiruptor bescii (strain ATCC BAA-1888 / DSM 6725 / KCTC 15123 / Z-1320) (Anaerocellum thermophilum), this protein is Xylose isomerase.